A 205-amino-acid polypeptide reads, in one-letter code: Cell wall / vacuolar inhibitor of fructosidase 1 (205 aa).

The first 23 residues, methionine 1–glycine 23, serve as a signal peptide directing secretion. Disulfide bonds link cysteine 30–cysteine 39 and cysteine 93–cysteine 134. Residues asparagine 139 and asparagine 156 are each glycosylated (N-linked (GlcNAc...) asparagine).

This sequence belongs to the PMEI family. As to expression, mostly expressed in roots, senescent leaves and flowers (in sepals), and, to a lower extent, in stems, specifically in the vascular tissues (e.g. in the phloem).

The protein resides in the vacuole. Functionally, inhibits fructosidases from vacuoles (vacuolar invertase VI). The chain is Cell wall / vacuolar inhibitor of fructosidase 1 (C/VIF1) from Arabidopsis thaliana (Mouse-ear cress).